The following is a 323-amino-acid chain: Aspartate carbamoyltransferase catalytic subunit (323 aa).

The carbamoyl phosphate site is built by arginine 71 and threonine 72. Lysine 99 provides a ligand contact to L-aspartate. Residues arginine 121, histidine 151, and glutamine 154 each coordinate carbamoyl phosphate. Residues arginine 184 and arginine 239 each contribute to the L-aspartate site. Residues glycine 280 and proline 281 each contribute to the carbamoyl phosphate site.

The protein belongs to the aspartate/ornithine carbamoyltransferase superfamily. ATCase family. As to quaternary structure, heterododecamer (2C3:3R2) of six catalytic PyrB chains organized as two trimers (C3), and six regulatory PyrI chains organized as three dimers (R2).

It catalyses the reaction carbamoyl phosphate + L-aspartate = N-carbamoyl-L-aspartate + phosphate + H(+). It participates in pyrimidine metabolism; UMP biosynthesis via de novo pathway; (S)-dihydroorotate from bicarbonate: step 2/3. Its function is as follows. Catalyzes the condensation of carbamoyl phosphate and aspartate to form carbamoyl aspartate and inorganic phosphate, the committed step in the de novo pyrimidine nucleotide biosynthesis pathway. This chain is Aspartate carbamoyltransferase catalytic subunit, found in Cupriavidus metallidurans (strain ATCC 43123 / DSM 2839 / NBRC 102507 / CH34) (Ralstonia metallidurans).